Reading from the N-terminus, the 706-residue chain is Ribosomal RNA large subunit methyltransferase K/L (706 aa).

In terms of domain architecture, THUMP spans 43–154; sequence LMYQSLLWSR…RDMASVALDL (112 aa).

The protein belongs to the methyltransferase superfamily. RlmKL family.

The protein resides in the cytoplasm. It carries out the reaction guanosine(2445) in 23S rRNA + S-adenosyl-L-methionine = N(2)-methylguanosine(2445) in 23S rRNA + S-adenosyl-L-homocysteine + H(+). It catalyses the reaction guanosine(2069) in 23S rRNA + S-adenosyl-L-methionine = N(2)-methylguanosine(2069) in 23S rRNA + S-adenosyl-L-homocysteine + H(+). Specifically methylates the guanine in position 2445 (m2G2445) and the guanine in position 2069 (m7G2069) of 23S rRNA. The polypeptide is Ribosomal RNA large subunit methyltransferase K/L (Yersinia enterocolitica serotype O:8 / biotype 1B (strain NCTC 13174 / 8081)).